Consider the following 101-residue polypeptide: Small ribosomal subunit protein uS14 (101 aa).

This sequence belongs to the universal ribosomal protein uS14 family. As to quaternary structure, part of the 30S ribosomal subunit. Contacts proteins S3 and S10.

Its function is as follows. Binds 16S rRNA, required for the assembly of 30S particles and may also be responsible for determining the conformation of the 16S rRNA at the A site. This Ehrlichia ruminantium (strain Welgevonden) protein is Small ribosomal subunit protein uS14.